We begin with the raw amino-acid sequence, 239 residues long: Tetraspanin-9 (239 aa).

Residues 1 to 13 are Cytoplasmic-facing; sequence MARGCLCCLKYMM. Residues 14–34 traverse the membrane as a helical segment; that stretch reads FLFNLIFWLCGCGLLGVGIWL. The Extracellular segment spans residues 35–55; that stretch reads SVSQGNFATFSPSFPSLSAAN. Residues 56–76 traverse the membrane as a helical segment; the sequence is LVIAIGTIVMVTGFLGCLGAI. Over 77–85 the chain is Cytoplasmic; sequence KENKCLLLS. The helical transmembrane segment at 86–106 threads the bilayer; sequence FFIILLIILLAELILLILFFV. The Extracellular segment spans residues 107 to 203; sequence YMDKVNENAK…VKMWFDDNKH (97 aa). N-linked (GlcNAc...) asparagine glycosylation occurs at asparagine 180. The helical transmembrane segment at 204 to 224 threads the bilayer; it reads VLGTIGMCILIIQILGMAFSM. Over 225-239 the chain is Cytoplasmic; the sequence is TLFQQIHRTGKKYDA.

The protein belongs to the tetraspanin (TM4SF) family.

Its subcellular location is the membrane. This Xenopus tropicalis (Western clawed frog) protein is Tetraspanin-9 (tspan9).